The following is a 56-amino-acid chain: Protein YqiD (56 aa).

A helical transmembrane segment spans residues 2–22 (FIAWYWIVLIALVVVGYFLHL).

It localises to the cell inner membrane. The polypeptide is Protein YqiD (Escherichia coli (strain K12)).